The following is a 213-amino-acid chain: ATP synthase peripheral stalk subunit OSCP, mitochondrial (213 aa).

Residues methionine 1–proline 23 constitute a mitochondrion transit peptide. The SIFI-degron signature appears at alanine 5–proline 23. Residues lysine 60, lysine 70, and lysine 73 each carry the N6-acetyllysine modification. Position 90 is an N6-succinyllysine (lysine 90). N6-acetyllysine; alternate is present on residues lysine 100 and lysine 158. Lysine 100 and lysine 158 each carry N6-succinyllysine; alternate. N6-acetyllysine occurs at positions 176 and 192. Lysine 199 is subject to N6-succinyllysine.

This sequence belongs to the ATPase delta chain family. In terms of assembly, component of the ATP synthase complex composed at least of ATP5F1A/subunit alpha, ATP5F1B/subunit beta, ATP5MC1/subunit c (homooctomer), MT-ATP6/subunit a, MT-ATP8/subunit 8, ATP5ME/subunit e, ATP5MF/subunit f, ATP5MG/subunit g, ATP5MK/subunit k, ATP5MJ/subunit j, ATP5F1C/subunit gamma, ATP5F1D/subunit delta, ATP5F1E/subunit epsilon, ATP5PF/subunit F6, ATP5PB/subunit b, ATP5PD/subunit d, ATP5PO/subunit OSCP. ATP synthase complex consists of a soluble F(1) head domain (subunits alpha(3) and beta(3)) - the catalytic core - and a membrane F(0) domain - the membrane proton channel (subunits c, a, 8, e, f, g, k and j). These two domains are linked by a central stalk (subunits gamma, delta, and epsilon) rotating inside the F1 region and a stationary peripheral stalk (subunits F6, b, d, and OSCP). In terms of processing, in response to mitochondrial stress, the precursor protein is ubiquitinated by the SIFI complex in the cytoplasm before mitochondrial import, leading to its degradation. Within the SIFI complex, UBR4 initiates ubiquitin chain that are further elongated or branched by KCMF1. In terms of tissue distribution, expressed by the principal cells of the epididymis. Detected in flagella of epididymal sperm (at protein level).

It localises to the mitochondrion. The protein localises to the mitochondrion inner membrane. Functionally, subunit OSCP, of the mitochondrial membrane ATP synthase complex (F(1)F(0) ATP synthase or Complex V) that produces ATP from ADP in the presence of a proton gradient across the membrane which is generated by electron transport complexes of the respiratory chain. ATP synthase complex consist of a soluble F(1) head domain - the catalytic core - and a membrane F(1) domain - the membrane proton channel. These two domains are linked by a central stalk rotating inside the F(1) region and a stationary peripheral stalk. During catalysis, ATP synthesis in the catalytic domain of F(1) is coupled via a rotary mechanism of the central stalk subunits to proton translocation. In vivo, can only synthesize ATP although its ATP hydrolase activity can be activated artificially in vitro. Part of the complex F(0) domain. Part of the complex F(0) domain and the peripheric stalk, which acts as a stator to hold the catalytic alpha(3)beta(3) subcomplex and subunit a/ATP6 static relative to the rotary elements. This is ATP synthase peripheral stalk subunit OSCP, mitochondrial from Rattus norvegicus (Rat).